Consider the following 985-residue polypeptide: Serine/threonine-protein kinase N2 (985 aa).

An REM-1 1 domain is found at 33-109 (KLDFSDTIVQ…LQELNAHIVV (77 aa)). N6-acetyllysine is present on K77. Phosphoserine is present on S110. The tract at residues 111–136 (DPEDYTDCPRTPDTPNSDSRSSTSNN) is disordered. T121 and T124 each carry phosphothreonine. Residues 121 to 136 (TPDTPNSDSRSSTSNN) are compositionally biased toward low complexity. 2 consecutive REM-1 domains span residues 121-204 (TPDT…TNEL) and 207-286 (DNAK…ELPK). Phosphoserine occurs at positions 303, 307, 361, and 363. The segment at 352–383 (ATSVALPGWSPSENRSSFMSRTSKSKSGSSRN) is disordered. The C2 domain maps to 354-474 (SVALPGWSPS…LYLEPQGTLF (121 aa)). A compositionally biased stretch (low complexity) spans 366-382 (RSSFMSRTSKSKSGSSR). The interval 383 to 464 (NLLKTDDLSN…FLDNQRHGMA (82 aa)) is necessary to rescue apical junction formation. Phosphoserine is present on residues S536, S584, S621, and S632. The segment at 570 to 590 (DLEPEAPPAPPRASSLGEIDD) is disordered. The Protein kinase domain occupies 658–917 (FRCCAVLGRG…AEDVKKHPFF (260 aa)). Residues 664-672 (LGRGHFGKV) and K687 contribute to the ATP site. The active-site Proton acceptor is D783. T817 is subject to Phosphothreonine; by PDPK1. A necessary for the catalytic activity region spans residues 918–978 (RLTDWSALLD…EEEQEMFRDF (61 aa)). Residues 918-985 (RLTDWSALLD…RDFDYVADWC (68 aa)) form the AGC-kinase C-terminal domain. The residue at position 953 (S953) is a Phosphoserine. The residue at position 959 (T959) is a Phosphothreonine. The interval 979-985 (DYVADWC) is negatively regulates the responsiveness of the catalytic activity by cardiolipin and is required for optimal activation by the GTP-bound RhoA.

The protein belongs to the protein kinase superfamily. AGC Ser/Thr protein kinase family. PKC subfamily. As to quaternary structure, interacts (via the REM repeats) with RHOA (GTP-bound form preferentially) and interacts (via the REM repeats) with RAC1 (GTP-bound form preferentially); the interactions induce its autophosphorylation. Interacts with RHOC. Interacts with NCK1 (via SH3 domains) and NCK2. Interacts with CD44. Interacts (via C-terminal kinase domain) with PDPK1; the interaction stimulates PDPK1 kinase activity. Interacts with MAP3K2; the interaction activates PRK2 kinase activity in a MAP3K2-independent kinase activity. Interacts (via C-terminal domain) with AKT1; the interaction occurs with the C-terminal cleavage product of PRK2 in apoptotic cells. Interacts (via C-terminus) with PTPN13 (via PDZ 3 domain). Interacts with CDK10. Phosphorylated during mitosis. Autophosphorylated. Phosphorylated. Binding to Rho and Rac promotes autophosphorylation and phosphorylation on serine and threonine residues. Phosphorylated by CDK10. In terms of processing, proteolytically cleaved by caspase-3 during the induction of apoptotic cell death. Activated by limited proteolysis with trypsin. As to expression, expressed in liver (at protein level).

The protein localises to the cytoplasm. It is found in the nucleus. The protein resides in the membrane. Its subcellular location is the cell projection. It localises to the lamellipodium. The protein localises to the cytoskeleton. It is found in the cleavage furrow. The protein resides in the midbody. Its subcellular location is the cell junction. The catalysed reaction is L-seryl-[protein] + ATP = O-phospho-L-seryl-[protein] + ADP + H(+). The enzyme catalyses L-threonyl-[protein] + ATP = O-phospho-L-threonyl-[protein] + ADP + H(+). Its activity is regulated as follows. Kinase activity is activated upon binding to GTP-bound Rho1/Rac1 GTPases. Activated by caspase-3 (CASP3) cleavage during apoptosis. Activated by lipids, particularly cardiolipin and to a lesser extent by other acidic phospholipids and unsaturated fatty acids. Two specific sites, Thr-817 (activation loop of the kinase domain) and Thr-959 (turn motif), need to be phosphorylated for its full activation. PKC-related serine/threonine-protein kinase and Rho/Rac effector protein that participates in specific signal transduction responses in the cell. Plays a role in the regulation of cell cycle progression, actin cytoskeleton assembly, cell migration, cell adhesion, tumor cell invasion and transcription activation signaling processes. Phosphorylates CTTN in hyaluronan-induced astrocytes and hence decreases CTTN ability to associate with filamentous actin. Phosphorylates HDAC5, therefore lead to impair HDAC5 import. Direct RhoA target required for the regulation of the maturation of primordial junctions into apical junction formation in bronchial epithelial cells. Required for G2/M phases of the cell cycle progression and abscission during cytokinesis in a ECT2-dependent manner. Stimulates FYN kinase activity that is required for establishment of skin cell-cell adhesion during keratinocytes differentiation. Regulates epithelial bladder cells speed and direction of movement during cell migration and tumor cell invasion. Inhibits Akt pro-survival-induced kinase activity. Mediates Rho protein-induced transcriptional activation via the c-fos serum response factor (SRF). Involved in the negative regulation of ciliogenesis. The protein is Serine/threonine-protein kinase N2 (Pkn2) of Rattus norvegicus (Rat).